A 159-amino-acid chain; its full sequence is Ribosomal RNA large subunit methyltransferase H (159 aa).

Residues L76, G107, and 126-131 each bind S-adenosyl-L-methionine; that span reads ISSLTL.

The protein belongs to the RNA methyltransferase RlmH family. As to quaternary structure, homodimer.

The protein localises to the cytoplasm. It carries out the reaction pseudouridine(1915) in 23S rRNA + S-adenosyl-L-methionine = N(3)-methylpseudouridine(1915) in 23S rRNA + S-adenosyl-L-homocysteine + H(+). In terms of biological role, specifically methylates the pseudouridine at position 1915 (m3Psi1915) in 23S rRNA. The chain is Ribosomal RNA large subunit methyltransferase H from Cupriavidus metallidurans (strain ATCC 43123 / DSM 2839 / NBRC 102507 / CH34) (Ralstonia metallidurans).